The sequence spans 796 residues: MAPSNGPRSGKNAKSSHTLKRKRAQDDLSTLTQRVEDLDIKETYKSFSDLPLSEPTASGLASSHFKTLTDIQSRAIGHALKGRDILGAAKTGSGKTLAFLIPVLENLYRKQWSEHDGLGALILSPTRELAIQIFEVLRKIGRYHTFSAGLIIGGKSLKEEQERLGRMNILVCTPGRMLQHLDQTAMFDVFNLQMLVLDEADRILDMGFQKTVDAIVGHLPKERQTLLFSATQTKKVSDLARLSLQDPEYVAVHETASSATPSTLQQHYVVTPLSQKLDVLWSFIRSNLKAKTIVFLSSGKQVRFVYESFRHLQPGIPLMHLHGRQKQGGRLDITAKFSQAKHAVLFSTDITARGLDFPAVDWVIQMDCPEDADTYIHRVGRTARYERDGRAVLFLDPSEESGMLKRLEQKKVPIERINIKANKQQSIRDQLQNMCFKDPELKYLGQKAFISYVKSVYVQKDKEVFKLKELKLEDFASSLGLPGAPRIKFIKGDDTKERKNASRATAYLSSDDDSDEGGEKKSKKDEKQVRTKYDRMFERRNQDVLADHYSKLINDDGTLVDPSKTASAADDADEDDDFLSVKRRFDAGDEDLGGNSEEELEQKGVKVVQLDGKDTLVIDSKRREKLLKSKKKLLKFKGKGTKLIYDDEGNAHELYEMEDEEDFKARGDAKEQQARFLAEETERTRTADMEDKEVAKQKRREKKEKRKARERELLAEEEAEEAVAQLAPYKEDDEFSASDREDDAPRPSKKQKVRIAEPEESKEEPWYKKSKKPAAKAPEQIQTLEDLESLATGLLG.

Residues 1 to 28 form a disordered region; sequence MAPSNGPRSGKNAKSSHTLKRKRAQDDL. Residues 45-73 carry the Q motif motif; sequence KSFSDLPLSEPTASGLASSHFKTLTDIQS. In terms of domain architecture, Helicase ATP-binding spans 76-250; it reads IGHALKGRDI…RLSLQDPEYV (175 aa). 89-96 lines the ATP pocket; it reads AKTGSGKT. The DEAD box motif lies at 198–201; the sequence is DEAD. In terms of domain architecture, Helicase C-terminal spans 272-435; sequence PLSQKLDVLW…SIRDQLQNMC (164 aa). Disordered stretches follow at residues 500–533, 556–575, and 662–796; these read NASRATAYLSSDDDSDEGGEKKSKKDEKQVRTKY, DGTLVDPSKTASAADDADED, and DFKA…GLLG. Positions 517–533 are enriched in basic and acidic residues; the sequence is GGEKKSKKDEKQVRTKY. Basic and acidic residues predominate over residues 663–696; sequence FKARGDAKEQQARFLAEETERTRTADMEDKEVAK. The segment covering 697–706 has biased composition (basic residues); it reads QKRREKKEKR. Composition is skewed to basic and acidic residues over residues 737 to 746 and 754 to 767; these read ASDREDDAPR and RIAEPEESKEEPWY.

This sequence belongs to the DEAD box helicase family. DDX10/DBP4 subfamily. In terms of assembly, interacts with the U3 and U14 snoRNAs. Associates with pre-ribosomal complexes.

The protein resides in the nucleus. It is found in the nucleolus. It catalyses the reaction ATP + H2O = ADP + phosphate + H(+). Its function is as follows. ATP-dependent RNA helicase required for ribosome biogenesis. Involved in the release of U14 snoRNA in pre-ribosomal complexes. Required for pre-rRNA cleavage at site A2. In Aspergillus oryzae (strain ATCC 42149 / RIB 40) (Yellow koji mold), this protein is ATP-dependent RNA helicase dbp4 (dbp4).